A 527-amino-acid chain; its full sequence is GMP synthase [glutamine-hydrolyzing] (527 aa).

The Glutamine amidotransferase type-1 domain occupies 19–212 (KIIVLDYGSQ…AFSICGAKGD (194 aa)). The Nucleophile role is filled by Cys-96. Catalysis depends on residues His-186 and Glu-188. The 190-residue stretch at 213–402 (WSMANFVDMQ…LGMPDEVVWR (190 aa)) folds into the GMPS ATP-PPase domain. Position 240–246 (240–246 (SGGVDSS)) interacts with ATP.

As to quaternary structure, homodimer.

It catalyses the reaction XMP + L-glutamine + ATP + H2O = GMP + L-glutamate + AMP + diphosphate + 2 H(+). The protein operates within purine metabolism; GMP biosynthesis; GMP from XMP (L-Gln route): step 1/1. In terms of biological role, catalyzes the synthesis of GMP from XMP. The chain is GMP synthase [glutamine-hydrolyzing] from Streptococcus thermophilus (strain ATCC BAA-250 / LMG 18311).